Reading from the N-terminus, the 79-residue chain is Small cysteine-rich protein 2 (79 aa).

The N-terminal stretch at 1–21 is a signal peptide; that stretch reads MRSQHVLILLLGLVCASQVLG. Residues 22–35 constitute a propeptide that is removed on maturation; the sequence is KHLTKVKAKALHYD.

It belongs to the Cnidaria small cysteine-rich protein (SCRiP) family. delta subfamily. In terms of processing, contains 4 disulfide bonds.

The protein resides in the secreted. The protein localises to the nematocyst. Its function is as follows. This recombinant protein induces severe neurotoxicity on zebrafish larvae (Danio rerio) at a concentration of 230 mg/ml, but does not show toxicity when injected in blowfly larvae (Sarcophaga falculata). All fish incubated with this protein died within 200 minutes of exposure. Has also been claimed to be implied in calcification, but this function seems improbable. The sequence is that of Small cysteine-rich protein 2 from Acropora millepora (Staghorn coral).